The primary structure comprises 154 residues: Endoribonuclease YbeY (154 aa).

Positions 118, 122, and 128 each coordinate Zn(2+).

The protein belongs to the endoribonuclease YbeY family. It depends on Zn(2+) as a cofactor.

The protein resides in the cytoplasm. Single strand-specific metallo-endoribonuclease involved in late-stage 70S ribosome quality control and in maturation of the 3' terminus of the 16S rRNA. This Macrococcus caseolyticus (strain JCSC5402) (Macrococcoides caseolyticum) protein is Endoribonuclease YbeY.